A 126-amino-acid polypeptide reads, in one-letter code: Aspartate 1-decarboxylase (126 aa).

S25 functions as the Schiff-base intermediate with substrate; via pyruvic acid in the catalytic mechanism. A Pyruvic acid (Ser) modification is found at S25. Residue T57 participates in substrate binding. Y58 (proton donor) is an active-site residue. 72–74 (GAT) serves as a coordination point for substrate.

The protein belongs to the PanD family. As to quaternary structure, heterooctamer of four alpha and four beta subunits. Requires pyruvate as cofactor. Post-translationally, is synthesized initially as an inactive proenzyme, which is activated by self-cleavage at a specific serine bond to produce a beta-subunit with a hydroxyl group at its C-terminus and an alpha-subunit with a pyruvoyl group at its N-terminus.

It localises to the cytoplasm. It catalyses the reaction L-aspartate + H(+) = beta-alanine + CO2. It participates in cofactor biosynthesis; (R)-pantothenate biosynthesis; beta-alanine from L-aspartate: step 1/1. Its function is as follows. Catalyzes the pyruvoyl-dependent decarboxylation of aspartate to produce beta-alanine. The polypeptide is Aspartate 1-decarboxylase (Campylobacter jejuni subsp. doylei (strain ATCC BAA-1458 / RM4099 / 269.97)).